Here is a 623-residue protein sequence, read N- to C-terminus: UvrABC system protein C (623 aa).

In terms of domain architecture, GIY-YIG spans Asp13 to Ile92. Residues Asn204–Val239 enclose the UVR domain.

This sequence belongs to the UvrC family. In terms of assembly, interacts with UvrB in an incision complex.

Its subcellular location is the cytoplasm. Functionally, the UvrABC repair system catalyzes the recognition and processing of DNA lesions. UvrC both incises the 5' and 3' sides of the lesion. The N-terminal half is responsible for the 3' incision and the C-terminal half is responsible for the 5' incision. This chain is UvrABC system protein C, found in Clostridium acetobutylicum (strain ATCC 824 / DSM 792 / JCM 1419 / IAM 19013 / LMG 5710 / NBRC 13948 / NRRL B-527 / VKM B-1787 / 2291 / W).